Here is a 103-residue protein sequence, read N- to C-terminus: U-scoloptoxin(24)-Er1a (103 aa).

A signal peptide spans M1–G23.

This sequence belongs to the scoloptoxin-24 family. Contains 1 disulfide bond. Expressed by the venom gland.

It is found in the secreted. This Ethmostigmus rubripes (Giant centipede) protein is U-scoloptoxin(24)-Er1a.